The sequence spans 230 residues: Thymidylate kinase (230 aa).

20–27 (GGEGSGKS) contacts ATP.

This sequence belongs to the thymidylate kinase family.

It carries out the reaction dTMP + ATP = dTDP + ADP. Functionally, phosphorylation of dTMP to form dTDP in both de novo and salvage pathways of dTTP synthesis. The polypeptide is Thymidylate kinase (Nitrobacter hamburgensis (strain DSM 10229 / NCIMB 13809 / X14)).